A 223-amino-acid polypeptide reads, in one-letter code: Octanoyltransferase (223 aa).

Residues 31 to 216 enclose the BPL/LPL catalytic domain; that stretch reads GQIGDTLLLL…QIGEVFALEP (186 aa). Residues 76–83, 145–147, and 159–161 contribute to the substrate site; these read RGGEVTYH, AIG, and GLA. Cys-177 (acyl-thioester intermediate) is an active-site residue.

This sequence belongs to the LipB family.

It localises to the cytoplasm. It catalyses the reaction octanoyl-[ACP] + L-lysyl-[protein] = N(6)-octanoyl-L-lysyl-[protein] + holo-[ACP] + H(+). The protein operates within protein modification; protein lipoylation via endogenous pathway; protein N(6)-(lipoyl)lysine from octanoyl-[acyl-carrier-protein]: step 1/2. Its function is as follows. Catalyzes the transfer of endogenously produced octanoic acid from octanoyl-acyl-carrier-protein onto the lipoyl domains of lipoate-dependent enzymes. Lipoyl-ACP can also act as a substrate although octanoyl-ACP is likely to be the physiological substrate. This is Octanoyltransferase from Chloroflexus aurantiacus (strain ATCC 29366 / DSM 635 / J-10-fl).